The chain runs to 449 residues: Sensor protein QseC (449 aa).

Residues 1–12 (MKFTQRLSLRVR) lie on the Cytoplasmic side of the membrane. Residues 13–33 (LTLIFLILASVTWLLSSFVAW) traverse the membrane as a helical segment. Over 34-156 (KQTTDNVDEL…QEWEYREDMA (123 aa)) the chain is Periplasmic. A helical membrane pass occupies residues 157–177 (LAIVAGQLIPWLVALPVMLII). The Cytoplasmic portion of the chain corresponds to 178 to 449 (MMVLLGRELA…QGGFEAKVSW (272 aa)). The 207-residue stretch at 243 to 449 (DAAHELRSPL…QGGFEAKVSW (207 aa)) folds into the Histidine kinase domain. At H246 the chain carries Phosphohistidine; by autocatalysis.

The protein localises to the cell inner membrane. The enzyme catalyses ATP + protein L-histidine = ADP + protein N-phospho-L-histidine.. In terms of biological role, member of a two-component regulatory system QseB/QseC. Activates the flagella regulon by activating transcription of FlhDC. May activate QseB by phosphorylation. The sequence is that of Sensor protein QseC (qseC) from Escherichia coli O157:H7.